A 181-amino-acid polypeptide reads, in one-letter code: RNA pyrophosphohydrolase (181 aa).

In terms of domain architecture, Nudix hydrolase spans Gly6–Gln148. The short motif at Gly38–Gly59 is the Nudix box element.

The protein belongs to the Nudix hydrolase family. RppH subfamily. Requires a divalent metal cation as cofactor.

In terms of biological role, accelerates the degradation of transcripts by removing pyrophosphate from the 5'-end of triphosphorylated RNA, leading to a more labile monophosphorylated state that can stimulate subsequent ribonuclease cleavage. The sequence is that of RNA pyrophosphohydrolase from Halorhodospira halophila (strain DSM 244 / SL1) (Ectothiorhodospira halophila (strain DSM 244 / SL1)).